The sequence spans 335 residues: Pregnancy-specific beta-1-glycoprotein 5 (335 aa).

Positions 1 to 34 (MGPLSAPPCTQHITWKGLLLTASLLNFWNLPITA) are cleaved as a signal peptide. The Ig-like V-type domain maps to 35–144 (QVTIEALPPK…TGYFTFNLYL (110 aa)). 2 N-linked (GlcNAc...) asparagine glycosylation sites follow: Asn104 and Asn111. The short motif at 127–129 (RGD) is the Cell attachment site element. Ig-like C2-type domains are found at residues 147–234 (PKPY…VTLN) and 239–317 (PDLP…KSMT). Intrachain disulfides connect Cys169-Cys217 and Cys261-Cys301. Asn175 and Asn210 each carry an N-linked (GlcNAc...) asparagine glycan.

It belongs to the immunoglobulin superfamily. CEA family. As to expression, synthesized by syncytiotrophoblast of the placenta.

The protein resides in the secreted. This chain is Pregnancy-specific beta-1-glycoprotein 5 (PSG5), found in Homo sapiens (Human).